A 714-amino-acid chain; its full sequence is Fatty acid oxidation complex subunit alpha (714 aa).

The tract at residues 1–190 (MEMASAFTLN…KLGLVDDVVP (190 aa)) is enoyl-CoA hydratase. Residues 306 to 714 (APLNSVGILG…FWKTTATDLQ (409 aa)) form a 3-hydroxyacyl-CoA dehydrogenase region.

It in the N-terminal section; belongs to the enoyl-CoA hydratase/isomerase family. In the central section; belongs to the 3-hydroxyacyl-CoA dehydrogenase family. Heterotetramer of two alpha chains (FadJ) and two beta chains (FadI).

It is found in the cytoplasm. It catalyses the reaction a (3S)-3-hydroxyacyl-CoA = a (2E)-enoyl-CoA + H2O. The enzyme catalyses a 4-saturated-(3S)-3-hydroxyacyl-CoA = a (3E)-enoyl-CoA + H2O. It carries out the reaction a (3S)-3-hydroxyacyl-CoA + NAD(+) = a 3-oxoacyl-CoA + NADH + H(+). The catalysed reaction is (3S)-3-hydroxybutanoyl-CoA = (3R)-3-hydroxybutanoyl-CoA. It participates in lipid metabolism; fatty acid beta-oxidation. Catalyzes the formation of a hydroxyacyl-CoA by addition of water on enoyl-CoA. Also exhibits 3-hydroxyacyl-CoA epimerase and 3-hydroxyacyl-CoA dehydrogenase activities. The sequence is that of Fatty acid oxidation complex subunit alpha from Escherichia coli O45:K1 (strain S88 / ExPEC).